The chain runs to 297 residues: ER membrane protein complex subunit 2 (297 aa).

N-acetylalanine is present on A2. TPR repeat units follow at residues H87–N120, Q155–N188, and C192–N225. K255 is subject to N6-acetyllysine.

Belongs to the EMC2 family. In terms of assembly, component of the ER membrane protein complex (EMC). Interacts with WNK1 (via amphipathic alpha-helix region); promoting the ER membrane protein complex assembly by preventing EMC2 ubiquitination. Post-translationally, ubiquitinated when soluble in the cytoplasm, leading to its degradation by the proteasome. Interaction with EMC2 prevents its ubiquitination and degradation.

The protein resides in the endoplasmic reticulum membrane. Its function is as follows. Part of the endoplasmic reticulum membrane protein complex (EMC) that enables the energy-independent insertion into endoplasmic reticulum membranes of newly synthesized membrane proteins. Preferentially accommodates proteins with transmembrane domains that are weakly hydrophobic or contain destabilizing features such as charged and aromatic residues. Involved in the cotranslational insertion of multi-pass membrane proteins in which stop-transfer membrane-anchor sequences become ER membrane spanning helices. It is also required for the post-translational insertion of tail-anchored/TA proteins in endoplasmic reticulum membranes. By mediating the proper cotranslational insertion of N-terminal transmembrane domains in an N-exo topology, with translocated N-terminus in the lumen of the ER, controls the topology of multi-pass membrane proteins like the G protein-coupled receptors. By regulating the insertion of various proteins in membranes, it is indirectly involved in many cellular processes. This is ER membrane protein complex subunit 2 from Pongo abelii (Sumatran orangutan).